The chain runs to 534 residues: Prolyl 4-hydroxylase subunit alpha-2 (534 aa).

Positions methionine 1–alanine 21 are cleaved as a signal peptide. N-linked (GlcNAc...) asparagine glycosylation is present at asparagine 115. One copy of the TPR repeat lies at valine 207–histidine 240. Asparagine 263 is a glycosylation site (N-linked (GlcNAc...) asparagine). Positions threonine 413–glutamate 519 constitute a Fe2OG dioxygenase domain. The Fe cation site is built by histidine 431, aspartate 433, and histidine 500. Lysine 510 contributes to the 2-oxoglutarate binding site.

It belongs to the P4HA family. Heterotetramer of two alpha-2 chains and two beta chains (the beta chain is the multi-functional PDI). Fe(2+) serves as cofactor. It depends on L-ascorbate as a cofactor.

It localises to the endoplasmic reticulum lumen. It carries out the reaction L-prolyl-[collagen] + 2-oxoglutarate + O2 = trans-4-hydroxy-L-prolyl-[collagen] + succinate + CO2. In terms of biological role, catalyzes the post-translational formation of 4-hydroxyproline in -Xaa-Pro-Gly- sequences in collagens and other proteins. The chain is Prolyl 4-hydroxylase subunit alpha-2 (P4HA2) from Gallus gallus (Chicken).